Reading from the N-terminus, the 300-residue chain is Protoheme IX farnesyltransferase (300 aa).

A run of 9 helical transmembrane segments spans residues 20–40, 43–63, 94–114, 116–136, 142–162, 173–193, 215–235, 241–261, and 276–296; these read ITKM…YFLG, TIDF…VGAS, PVAF…LYVI, PKTA…YTPL, LSVF…WVAA, LFMI…WWLF, IQII…VFGV, LTPV…YYAI, and MFAS…DKFI.

The protein belongs to the UbiA prenyltransferase family. Protoheme IX farnesyltransferase subfamily.

The protein resides in the cell membrane. The enzyme catalyses heme b + (2E,6E)-farnesyl diphosphate + H2O = Fe(II)-heme o + diphosphate. The protein operates within porphyrin-containing compound metabolism; heme O biosynthesis; heme O from protoheme: step 1/1. Functionally, converts heme B (protoheme IX) to heme O by substitution of the vinyl group on carbon 2 of heme B porphyrin ring with a hydroxyethyl farnesyl side group. The sequence is that of Protoheme IX farnesyltransferase from Christiangramia forsetii (strain DSM 17595 / CGMCC 1.15422 / KT0803) (Gramella forsetii).